The following is a 461-amino-acid chain: Glycine--tRNA ligase (461 aa).

Substrate contacts are provided by Arg-100 and Glu-163. ATP is bound by residues 195 to 197 (RNE), 205 to 210 (FRTREF), 282 to 283 (EL), and 326 to 329 (GLGR). Residue 210 to 214 (FEQME) coordinates substrate. Substrate is bound at residue 322–326 (EPAAG).

The protein belongs to the class-II aminoacyl-tRNA synthetase family. As to quaternary structure, homodimer.

It is found in the cytoplasm. The catalysed reaction is tRNA(Gly) + glycine + ATP = glycyl-tRNA(Gly) + AMP + diphosphate. Catalyzes the attachment of glycine to tRNA(Gly). The chain is Glycine--tRNA ligase from Corynebacterium glutamicum (strain ATCC 13032 / DSM 20300 / JCM 1318 / BCRC 11384 / CCUG 27702 / LMG 3730 / NBRC 12168 / NCIMB 10025 / NRRL B-2784 / 534).